Here is a 545-residue protein sequence, read N- to C-terminus: Carboxypeptidase Y homolog A (545 aa).

Positions 1–18 (MKSSLALALLVGGAIASG) are cleaved as a signal peptide. A propeptide spanning residues 19 to 125 (PQQQVLREPV…RLDTYDLRVK (107 aa)) is cleaved from the precursor. 5 cysteine pairs are disulfide-bonded: C179/C418, C313/C327, C337/C360, C344/C353, and C382/C388. N210 carries an N-linked (GlcNAc...) asparagine glycan. The active site involves S266. D457 is a catalytic residue. Residues N487 and N507 are each glycosylated (N-linked (GlcNAc...) asparagine). Residue H518 is part of the active site.

It belongs to the peptidase S10 family.

It is found in the vacuole. It carries out the reaction Release of a C-terminal amino acid with broad specificity.. Functionally, vacuolar carboxypeptidase involved in degradation of small peptides. Digests preferentially peptides containing an aliphatic or hydrophobic residue in P1' position, as well as methionine, leucine or phenylalanine in P1 position of ester substrate. The protein is Carboxypeptidase Y homolog A (CPYA) of Ajellomyces capsulatus (strain NAm1 / WU24) (Darling's disease fungus).